We begin with the raw amino-acid sequence, 169 residues long: Inorganic pyrophosphatase (169 aa).

Residue methionine 1 is modified to N-formylmethionine. Residues lysine 28, arginine 42, and tyrosine 54 each coordinate substrate. Residues aspartate 64, aspartate 69, and aspartate 101 each contribute to the Mg(2+) site. Substrate is bound at residue tyrosine 138.

This sequence belongs to the PPase family. Homohexamer. Mg(2+) is required as a cofactor.

It is found in the cytoplasm. The enzyme catalyses diphosphate + H2O = 2 phosphate + H(+). Inhibited by ATP, but not by fructose 1,6-bisphosphate or 2-phosphoglycerate. Functionally, hydrolyzes PPi generated in anabolic reactions. In terms of biological role, catalyzes the hydrolysis of inorganic pyrophosphate (PPi) forming two phosphate ions. This chain is Inorganic pyrophosphatase, found in Synechocystis sp. (strain ATCC 27184 / PCC 6803 / Kazusa).